The primary structure comprises 819 residues: Probable phosphoenolpyruvate synthase (819 aa).

H441 acts as the Tele-phosphohistidine intermediate in catalysis. Residues R540, R587, E684, G706, T707, N708, and D709 each coordinate substrate. E684 contributes to the Mg(2+) binding site. D709 contacts Mg(2+). Residue C756 is the Proton donor of the active site.

The protein belongs to the PEP-utilizing enzyme family. It depends on Mg(2+) as a cofactor.

The enzyme catalyses pyruvate + ATP + H2O = phosphoenolpyruvate + AMP + phosphate + 2 H(+). It participates in carbohydrate biosynthesis; gluconeogenesis. In terms of biological role, catalyzes the phosphorylation of pyruvate to phosphoenolpyruvate. This Pyrococcus abyssi (strain GE5 / Orsay) protein is Probable phosphoenolpyruvate synthase (ppsA).